A 284-amino-acid polypeptide reads, in one-letter code: Probable palmitoyltransferase ZDHHC24 (284 aa).

Topologically, residues 1–18 (MGESWAARGAEGAPARMP) are cytoplasmic. A helical transmembrane segment spans residues 19–39 (LVLTALWAAVVVLELAYVMVL). Residues 40–52 (GPGPPPLGPLARA) lie on the Extracellular side of the membrane. A helical transmembrane segment spans residues 53–73 (LQLALAAYQLLNLLGNVVLFL). Topologically, residues 74 to 137 (RSDPSIRGVM…GCCVGFHNYR (64 aa)) are cytoplasmic. Positions 94 to 144 (AYCYQCQSQVPPRSGHCSACRVCILRRDHHCRLLGCCVGFHNYRPFLCLLL) constitute a DHHC domain. Cys124 serves as the catalytic S-palmitoyl cysteine intermediate. Residues 138–158 (PFLCLLLHSAGVLLHISVLLG) traverse the membrane as a helical segment. The Extracellular portion of the chain corresponds to 159–166 (PALSALLQ). The helical transmembrane segment at 167–187 (AHSALYTVALLLLPWLMLLTG) threads the bilayer. Residues 188-195 (KVSLAQFA) lie on the Cytoplasmic side of the membrane. A helical membrane pass occupies residues 196 to 216 (LAFVVDTCVAGALLCGAGLLF). At 217 to 284 (HGMLLLRGQT…TPGDVGLVTS (68 aa)) the chain is on the extracellular side.

The protein belongs to the DHHC palmitoyltransferase family.

Its subcellular location is the membrane. It catalyses the reaction L-cysteinyl-[protein] + hexadecanoyl-CoA = S-hexadecanoyl-L-cysteinyl-[protein] + CoA. Its function is as follows. Probable palmitoyltransferase that could catalyze the addition of palmitate onto various protein substrates. In Mus musculus (Mouse), this protein is Probable palmitoyltransferase ZDHHC24.